The primary structure comprises 2788 residues: Multiple epidermal growth factor-like domains protein 8 (2788 aa).

Residues 1–27 (MALGGALAAALALAFAVLGPLSHKVLA) form the signal peptide. The Extracellular segment spans residues 28-2590 (GDCKGQRQVL…FFRQDQAHID (2563 aa)). 6 disulfides stabilise this stretch: Cys-30/Cys-57, Cys-142/Cys-152, Cys-146/Cys-158, Cys-174/Cys-184, Cys-178/Cys-191, and Cys-193/Cys-202. The CUB 1 domain occupies 30 to 140 (CKGQRQVLRE…LGFNASFRFS (111 aa)). Asn-50 carries N-linked (GlcNAc...) asparagine glycosylation. 2 EGF-like domains span residues 138-168 (RFSL…GGPD) and 170-203 (GLQE…RACD). Kelch repeat units lie at residues 241–287 (LLAV…AVAW), 290–338 (FLVL…AGHA), 346–399 (WLYV…FHAP), 402–453 (TLLV…FHTA), 459–511 (YMVV…APPS), and 525–575 (VLLV…SRDP). 3 PSI domains span residues 561 to 613 (YCSM…SDCQ), 847 to 899 (ACSS…ALCP), and 900 to 947 (LCEE…EECP). Asn-1048 carries an N-linked (GlcNAc...) asparagine glycan. An EGF-like 3; calcium-binding domain is found at 1074 to 1115 (DVDECRLGLARCHPRATCLNTPLSYECHCQRGYQGDGITHCN). 16 disulfide bridges follow: Cys-1078/Cys-1091, Cys-1085/Cys-1100, Cys-1102/Cys-1114, Cys-1163/Cys-1171, Cys-1165/Cys-1179, Cys-1182/Cys-1191, Cys-1194/Cys-1208, Cys-1211/Cys-1224, Cys-1213/Cys-1231, Cys-1233/Cys-1242, Cys-1245/Cys-1259, Cys-1263/Cys-1302, Cys-1336/Cys-1367, Cys-1407/Cys-1421, Cys-1415/Cys-1433, and Cys-1435/Cys-1444. Laminin EGF-like domains are found at residues 1163-1210 (CGCN…GCRP) and 1211-1261 (CQCN…SCFR). The 143-residue stretch at 1263-1405 (CGGRALLTNV…WGFNASVGSA (143 aa)) folds into the CUB 2 domain. Asn-1271 is a glycosylation site (N-linked (GlcNAc...) asparagine). Position 1353 is a phosphothreonine (Thr-1353). Residues 1403 to 1445 (GSARCGSGGPGSCPVPQECVPQDGAAGAGLCRCPQGWAGPHCR) enclose the EGF-like 4 domain. Kelch repeat units follow at residues 1522–1570 (TLWM…SFHA), 1580–1626 (AMYL…HTLT), 1632–1678 (SLLL…SAVY), 1684–1734 (SLYV…HASA), 1739–1786 (TMVV…ESVA), and 1795–1840 (RLYI…WCHG). PSI domains follow at residues 1819–1859 (PCRL…PPCS), 1867–1922 (ECRR…NDCR), 2003–2061 (PCHL…ESCS), and 2063–2120 (GCAQ…LSCP). Asn-2009 is a glycosylation site (N-linked (GlcNAc...) asparagine). The region spanning 2121–2159 (PEDECANGHHDCNETQNCHDQPHGYECSCKTGYTMDNVT) is the EGF-like 5 domain. 2 disulfide bridges follow: Cys-2125/Cys-2138 and Cys-2132/Cys-2147. Asn-2157 and Asn-2172 each carry an N-linked (GlcNAc...) asparagine glycan. Disulfide bonds link Cys-2196–Cys-2204, Cys-2198–Cys-2213, Cys-2216–Cys-2225, and Cys-2228–Cys-2242. 2 Laminin EGF-like domains span residues 2196–2244 (CRCN…TCRP) and 2323–2386 (CQCN…QCYR). Residues 2465–2507 (HTVHIQPPPPPPPPPPPADGVPRVASDLGGLGTGSGSGSPVEP) form a disordered region. Residues 2470–2483 (QPPPPPPPPPPPAD) show a composition bias toward pro residues. A helical membrane pass occupies residues 2591 to 2611 (LFVFFSVFFSCFFLFLSLCVL). The Cytoplasmic portion of the chain corresponds to 2612–2788 (LWKAKQALDQ…SQDNLTSMSL (177 aa)). Over residues 2761-2775 (GGAGGSGHGGGGGRK) the composition is skewed to gly residues. A disordered region spans residues 2761 to 2788 (GGAGGSGHGGGGGRKGLLSQDNLTSMSL). Over residues 2779–2788 (SQDNLTSMSL) the composition is skewed to polar residues.

Expressed in brain.

The protein localises to the membrane. In terms of biological role, acts as a negative regulator of hedgehog signaling. This Rattus norvegicus (Rat) protein is Multiple epidermal growth factor-like domains protein 8 (Megf8).